An 887-amino-acid polypeptide reads, in one-letter code: 3-hydroxy-3-methylglutaryl-coenzyme A reductase (887 aa).

The Cytoplasmic segment spans residues methionine 1–histidine 9. A helical transmembrane segment spans residues glycine 10–glycine 39. The Lumenal portion of the chain corresponds to asparagine 40–aspartate 56. The chain crosses the membrane as a helical span at residues valine 57–phenylalanine 78. In terms of domain architecture, SSD spans aspartate 61–leucine 218. Positions tyrosine 75 to phenylalanine 78 match the INSIG-binding motif motif. At glutamine 79–lysine 89 the chain is on the cytoplasmic side. Residue lysine 89 forms a Glycyl lysine isopeptide (Lys-Gly) (interchain with G-Cter in ubiquitin) linkage. The chain crosses the membrane as a helical span at residues tyrosine 90–leucine 114. Topologically, residues aspartate 115 to glutamate 123 are lumenal. A helical transmembrane segment spans residues alanine 124–serine 149. Residues glutamine 150–arginine 159 are Cytoplasmic-facing. Residues glycine 160–valine 187 form a helical membrane-spanning segment. Residues arginine 188–glutamate 191 are Lumenal-facing. Residues isoleucine 192–leucine 220 traverse the membrane as a helical segment. Over glutamate 221–lysine 248 the chain is Cytoplasmic. Lysine 248 is covalently cross-linked (Glycyl lysine isopeptide (Lys-Gly) (interchain with G-Cter in ubiquitin)). A helical transmembrane segment spans residues proline 249–alanine 275. The Lumenal segment spans residues aspartate 276–lysine 314. Asparagine 281 carries an N-linked (GlcNAc...) asparagine glycan. The helical transmembrane segment at methionine 315–phenylalanine 339 threads the bilayer. Topologically, residues glutamate 340–alanine 887 are cytoplasmic. Residues glutamate 558, lysine 690, and aspartate 766 each act as charge relay system in the active site. The active-site Proton donor is histidine 865. The residue at position 871 (serine 871) is a Phosphoserine.

This sequence belongs to the HMG-CoA reductase family. As to quaternary structure, homotetramer. Homodimer. Interacts (via its SSD) with INSIG1; the interaction, accelerated by sterols, leads to the recruitment of HMGCR to AMFR/gp78 for its ubiquitination by the sterol-mediated ERAD pathway. Interacts with UBIAD1. In terms of processing, undergoes sterol-mediated ubiquitination and ER-associated degradation (ERAD). Accumulation of sterols in the endoplasmic reticulum (ER) membrane, triggers binding of the reductase to the ER membrane protein INSIG1 or INSIG2. The INSIG1 binding leads to the recruitment of the ubiquitin ligase, AMFR/gp78, RNF139 or RNF145, initiating ubiquitination of the reductase. The ubiquitinated reductase is then extracted from the ER membrane and delivered to cytosolic 26S proteosomes by a mechanism probably mediated by the ATPase Valosin-containing protein VCP/p97. The INSIG2-binding leads to the recruitment of the ubiquitin ligase RNF139, initiating ubiquitination of the reductase. Lys-248 is the main site of ubiquitination. Ubiquitination is enhanced by the presence of a geranylgeranylated protein. N-glycosylated. Deglycosylated by NGLY1 on release from the endoplasmic reticulum (ER) in a sterol-mediated manner. Post-translationally, phosphorylated. Phosphorylation at Ser-871 reduces the catalytic activity.

It is found in the endoplasmic reticulum membrane. It localises to the peroxisome membrane. The catalysed reaction is (R)-mevalonate + 2 NADP(+) + CoA = (3S)-3-hydroxy-3-methylglutaryl-CoA + 2 NADPH + 2 H(+). It participates in metabolic intermediate biosynthesis; (R)-mevalonate biosynthesis; (R)-mevalonate from acetyl-CoA: step 3/3. Its activity is regulated as follows. Regulated by a negative feedback mechanism through sterols and non-sterol metabolites derived from mevalonate. Phosphorylation at Ser-871 down-regulates the catalytic activity. In terms of biological role, catalyzes the conversion of (3S)-hydroxy-3-methylglutaryl-CoA (HMG-CoA) to mevalonic acid, the rate-limiting step in the synthesis of cholesterol and other isoprenoids, thus plays a critical role in cellular cholesterol homeostasis. The polypeptide is 3-hydroxy-3-methylglutaryl-coenzyme A reductase (Hmgcr) (Mus musculus (Mouse)).